A 388-amino-acid chain; its full sequence is Putative C-&gt;U-editing enzyme APOBEC-4 (388 aa).

Residues 60–176 form the CMP/dCMP-type deaminase domain; that stretch reads PQTKHLTFYE…AWNREALRGL (117 aa). Residue His92 coordinates Zn(2+). Residue Glu94 is the Proton donor of the active site. Zn(2+)-binding residues include Cys126 and Cys133. Residues 322–356 form a disordered region; that stretch reads KVKALRKSPSGRPVKKEEARKGSTRSQEANETNKS.

Belongs to the cytidine and deoxycytidylate deaminase family. It depends on Zn(2+) as a cofactor.

Putative C to U editing enzyme whose physiological substrate is not yet known. The sequence is that of Putative C-&gt;U-editing enzyme APOBEC-4 (Apobec4) from Rattus norvegicus (Rat).